Here is a 68-residue protein sequence, read N- to C-terminus: U-actitoxin-Avt1 (68 aa).

An N-terminal signal peptide occupies residues 1–22 (MNSKAIISVFLIMLVVVSCTQA). Residues 23 to 40 (TYETEDDDEPGPRHSEKR) constitute a propeptide that is removed on maturation. The tract at residues 24 to 50 (YETEDDDEPGPRHSEKRSCARGCGGDS) is disordered. Over residues 32 to 41 (PGPRHSEKRS) the composition is skewed to basic and acidic residues. 3 disulfides stabilise this stretch: C42–C54, C46–C59, and C52–C66.

Its function is as follows. Stable protein with probable toxin activity. Does not show activity on all channels tested. Shows no hemolytic activity on rat erythrocytes. In Aulactinia veratra (Green snakelock anemone), this protein is U-actitoxin-Avt1.